The sequence spans 590 residues: Cyclin-dependent kinase-like 3 (590 aa).

Positions 4 to 286 (YETLGKVGEG…SSDLLHHEYF (283 aa)) constitute a Protein kinase domain. Residues 10–18 (VGEGSYGTV) and K33 contribute to the ATP site. A [NKR]KIAxRE motif is present at residues 45–51 (KIAMREI). D125 serves as the catalytic Proton acceptor. Phosphothreonine is present on T158. Y160 is subject to Phosphotyrosine. Disordered regions lie at residues 459-508 (RAKK…SNEN) and 547-590 (LKRE…PDVE). Residues 466 to 477 (SSQSIGQVMPNS) show a composition bias toward polar residues. Composition is skewed to basic and acidic residues over residues 547–556 (LKRESKKTDS) and 580–590 (TERKKNLPDVE).

The protein belongs to the protein kinase superfamily. CMGC Ser/Thr protein kinase family. CDC2/CDKX subfamily.

Its subcellular location is the cytoplasm. The catalysed reaction is L-seryl-[protein] + ATP = O-phospho-L-seryl-[protein] + ADP + H(+). It carries out the reaction L-threonyl-[protein] + ATP = O-phospho-L-threonyl-[protein] + ADP + H(+). In Macaca fascicularis (Crab-eating macaque), this protein is Cyclin-dependent kinase-like 3.